A 272-amino-acid chain; its full sequence is Shikimate dehydrogenase (NADP(+)) (272 aa).

Shikimate-binding positions include 14-16 (SLS) and Thr61. Residue Lys65 is the Proton acceptor of the active site. Asp102 contacts shikimate. Residues 127-131 (GAGGA), 151-156 (NRTPSK), and Leu215 each bind NADP(+). Tyr217 is a binding site for shikimate. Gly239 is a binding site for NADP(+).

The protein belongs to the shikimate dehydrogenase family. In terms of assembly, homodimer.

It catalyses the reaction shikimate + NADP(+) = 3-dehydroshikimate + NADPH + H(+). It functions in the pathway metabolic intermediate biosynthesis; chorismate biosynthesis; chorismate from D-erythrose 4-phosphate and phosphoenolpyruvate: step 4/7. Functionally, involved in the biosynthesis of the chorismate, which leads to the biosynthesis of aromatic amino acids. Catalyzes the reversible NADPH linked reduction of 3-dehydroshikimate (DHSA) to yield shikimate (SA). This Coxiella burnetii (strain Dugway 5J108-111) protein is Shikimate dehydrogenase (NADP(+)).